Consider the following 116-residue polypeptide: Large ribosomal subunit protein uL18 (116 aa).

This sequence belongs to the universal ribosomal protein uL18 family. As to quaternary structure, part of the 50S ribosomal subunit; part of the 5S rRNA/L5/L18/L25 subcomplex. Contacts the 5S and 23S rRNAs.

This is one of the proteins that bind and probably mediate the attachment of the 5S RNA into the large ribosomal subunit, where it forms part of the central protuberance. The chain is Large ribosomal subunit protein uL18 from Ectopseudomonas mendocina (strain ymp) (Pseudomonas mendocina).